Consider the following 237-residue polypeptide: Small ribosomal subunit protein uS17m (237 aa).

This sequence belongs to the universal ribosomal protein uS17 family. Component of the mitochondrial small ribosomal subunit (mt-SSU). Mature yeast 74S mitochondrial ribosomes consist of a small (37S) and a large (54S) subunit. The 37S small subunit contains a 15S ribosomal RNA (15S mt-rRNA) and 34 different proteins. The 54S large subunit contains a 21S rRNA (21S mt-rRNA) and 46 different proteins.

Its subcellular location is the mitochondrion. Its function is as follows. Component of the mitochondrial ribosome (mitoribosome), a dedicated translation machinery responsible for the synthesis of mitochondrial genome-encoded proteins, including at least some of the essential transmembrane subunits of the mitochondrial respiratory chain. The mitoribosomes are attached to the mitochondrial inner membrane and translation products are cotranslationally integrated into the membrane. uS17m may have a meiosis-specific role as it accumulates during the middle stage of sporulation. In Saccharomyces cerevisiae (strain ATCC 204508 / S288c) (Baker's yeast), this protein is Small ribosomal subunit protein uS17m (MRPS17).